Here is a 496-residue protein sequence, read N- to C-terminus: Probable CtpA-like serine protease (496 aa).

A compositionally biased stretch (basic and acidic residues) spans 1-16 (MDDKQHTTSSDDERAE). The tract at residues 1–27 (MDDKQHTTSSDDERAENATSNQDQQTN) is disordered. Over residues 17-27 (NATSNQDQQTN) the composition is skewed to polar residues. A helical membrane pass occupies residues 39-59 (FISILIGTIIITAVITVVAYI). A PDZ domain is found at 124 to 206 (TKSFNEGVSG…TEVTLTVQRG (83 aa)). Residues Ser329, Asp340, and Lys354 each act as charge relay system in the active site.

It belongs to the peptidase S41A family.

The protein localises to the cell membrane. This is Probable CtpA-like serine protease from Staphylococcus aureus (strain MRSA252).